The following is a 177-amino-acid chain: ATP synthase subunit delta (177 aa).

It belongs to the ATPase delta chain family. F-type ATPases have 2 components, F(1) - the catalytic core - and F(0) - the membrane proton channel. F(1) has five subunits: alpha(3), beta(3), gamma(1), delta(1), epsilon(1). F(0) has three main subunits: a(1), b(2) and c(10-14). The alpha and beta chains form an alternating ring which encloses part of the gamma chain. F(1) is attached to F(0) by a central stalk formed by the gamma and epsilon chains, while a peripheral stalk is formed by the delta and b chains.

Its subcellular location is the cell inner membrane. Functionally, f(1)F(0) ATP synthase produces ATP from ADP in the presence of a proton or sodium gradient. F-type ATPases consist of two structural domains, F(1) containing the extramembraneous catalytic core and F(0) containing the membrane proton channel, linked together by a central stalk and a peripheral stalk. During catalysis, ATP synthesis in the catalytic domain of F(1) is coupled via a rotary mechanism of the central stalk subunits to proton translocation. This protein is part of the stalk that links CF(0) to CF(1). It either transmits conformational changes from CF(0) to CF(1) or is implicated in proton conduction. This is ATP synthase subunit delta from Leptothrix cholodnii (strain ATCC 51168 / LMG 8142 / SP-6) (Leptothrix discophora (strain SP-6)).